The following is a 616-amino-acid chain: TAF6-like RNA polymerase II p300/CBP-associated factor-associated factor 65 kDa subunit 6L (616 aa).

Disordered regions lie at residues 399-432 (SLLL…EDPS) and 455-539 (FGTG…GTRD). 2 positions are modified to phosphoserine: Ser-494 and Ser-500. Asymmetric dimethylarginine is present on residues Arg-549, Arg-555, and Arg-587.

This sequence belongs to the TAF6 family. As to quaternary structure, the PCAF complex is composed of a number of TBP-associated factors (TAFS), such as TAF5, TAF5L, TAF6, TAF6L, TAF9, TAF10 and TAF12, PCAF, and also PCAF-associated factors (PAFs), such as TADA2L/ADA2, TADA3L/ADA3 and SPT3. Component of the STAGA transcription coactivator-HAT complex, at least composed of SUPT3H, GCN5L2, TAF5L, TAF6L, SUPT7L, TADA3L, TAD1L, TAF10, TAF12, TRRAP and TAF9.

Its subcellular location is the nucleus. Its function is as follows. Functions as a component of the PCAF complex. The PCAF complex is capable of efficiently acetylating histones in a nucleosomal context. The PCAF complex could be considered as the human version of the yeast SAGA complex. With TAF5L, acts as an epigenetic regulator essential for somatic reprogramming. Regulates target genes through H3K9ac deposition and MYC recruitment which trigger MYC regulatory network to orchestrate gene expression programs to control embryonic stem cell state. Functions with MYC to activate target gene expression through RNA polymerase II pause release. The sequence is that of TAF6-like RNA polymerase II p300/CBP-associated factor-associated factor 65 kDa subunit 6L from Mus musculus (Mouse).